The sequence spans 325 residues: ATP phosphoribosyltransferase (325 aa).

Belongs to the ATP phosphoribosyltransferase family. Long subfamily. It depends on Mg(2+) as a cofactor.

The protein localises to the cytoplasm. It carries out the reaction 1-(5-phospho-beta-D-ribosyl)-ATP + diphosphate = 5-phospho-alpha-D-ribose 1-diphosphate + ATP. It functions in the pathway amino-acid biosynthesis; L-histidine biosynthesis; L-histidine from 5-phospho-alpha-D-ribose 1-diphosphate: step 1/9. Feedback inhibited by histidine. Catalyzes the condensation of ATP and 5-phosphoribose 1-diphosphate to form N'-(5'-phosphoribosyl)-ATP (PR-ATP). Has a crucial role in the pathway because the rate of histidine biosynthesis seems to be controlled primarily by regulation of HisG enzymatic activity. The chain is ATP phosphoribosyltransferase from Afipia carboxidovorans (strain ATCC 49405 / DSM 1227 / KCTC 32145 / OM5) (Oligotropha carboxidovorans).